The primary structure comprises 226 residues: Phosphoribosylformylglycinamidine synthase subunit PurQ (226 aa).

Residues 3–226 form the Glutamine amidotransferase type-1 domain; it reads RVAVIRFPGT…FESLVEWCRS (224 aa). The active-site Nucleophile is C86. Active-site residues include H199 and E201.

As to quaternary structure, part of the FGAM synthase complex composed of 1 PurL, 1 PurQ and 2 PurS subunits.

The protein resides in the cytoplasm. The catalysed reaction is N(2)-formyl-N(1)-(5-phospho-beta-D-ribosyl)glycinamide + L-glutamine + ATP + H2O = 2-formamido-N(1)-(5-O-phospho-beta-D-ribosyl)acetamidine + L-glutamate + ADP + phosphate + H(+). It carries out the reaction L-glutamine + H2O = L-glutamate + NH4(+). The protein operates within purine metabolism; IMP biosynthesis via de novo pathway; 5-amino-1-(5-phospho-D-ribosyl)imidazole from N(2)-formyl-N(1)-(5-phospho-D-ribosyl)glycinamide: step 1/2. Its function is as follows. Part of the phosphoribosylformylglycinamidine synthase complex involved in the purines biosynthetic pathway. Catalyzes the ATP-dependent conversion of formylglycinamide ribonucleotide (FGAR) and glutamine to yield formylglycinamidine ribonucleotide (FGAM) and glutamate. The FGAM synthase complex is composed of three subunits. PurQ produces an ammonia molecule by converting glutamine to glutamate. PurL transfers the ammonia molecule to FGAR to form FGAM in an ATP-dependent manner. PurS interacts with PurQ and PurL and is thought to assist in the transfer of the ammonia molecule from PurQ to PurL. This is Phosphoribosylformylglycinamidine synthase subunit PurQ from Methanopyrus kandleri (strain AV19 / DSM 6324 / JCM 9639 / NBRC 100938).